The chain runs to 149 residues: 2S seed storage albumin protein (149 aa).

The N-terminal stretch at 1 to 22 (MKLFIILATATLLIAATQAKYL) is a signal peptide. Cystine bridges form between Cys-38–Cys-98, Cys-52–Cys-87, Cys-88–Cys-133, and Cys-100–Cys-140. No IgE-binding regions lie at residues 41–53 (QVKMMEPELVKCN), 68–81 (ALSRIQGEGCESEE), 84–95 (LRGCCVAMKEME), and 97–105 (ECVCEWMKM). The igE-binding stretch occupies residues 108–117 (ENQKGRIGET). The interval 121 to 131 (KGIRDLKELPN) is no IgE-binding. The interval 132–141 (KCGISEMECH) is igE-binding.

Belongs to the 2S seed storage albumins family. In terms of tissue distribution, expressed in seeds (at protein level). Expressed in seeds.

In terms of biological role, seed storage protein. The chain is 2S seed storage albumin protein from Fagopyrum tataricum (Tartarian buckwheat).